A 629-amino-acid polypeptide reads, in one-letter code: DNA mismatch repair protein MutL (629 aa).

Belongs to the DNA mismatch repair MutL/HexB family.

Functionally, this protein is involved in the repair of mismatches in DNA. It is required for dam-dependent methyl-directed DNA mismatch repair. May act as a 'molecular matchmaker', a protein that promotes the formation of a stable complex between two or more DNA-binding proteins in an ATP-dependent manner without itself being part of a final effector complex. The polypeptide is DNA mismatch repair protein MutL (Haemophilus influenzae (strain PittGG)).